The following is a 73-amino-acid chain: Mu-scoloptoxin(15)-Ssd1a (73 aa).

A signal peptide spans 1-20 (MKFHIIFCLLAALMMTSAFA).

Post-translationally, contains 2 disulfide bonds. Expressed by the venom gland.

The protein localises to the secreted. Voltage-gated sodium channel inhibitor. The protein is Mu-scoloptoxin(15)-Ssd1a of Scolopendra dehaani (Thai centipede).